A 388-amino-acid chain; its full sequence is F-box/LRR-repeat protein At3g59190 (388 aa).

Residues 11–64 form the F-box domain; that stretch reads KDIISNLPDALLCHVLSFLPTTEAASTSVLAKRWRFLLAFVPNLDLDNMIYDRP. LRR repeat units lie at residues 151 to 177, 180 to 205, 228 to 252, 313 to 345, and 346 to 371; these read KVSG…HLSA, FGDE…VMIK, CENI…EFTD, TMYL…TVET, and DERV…IFEV.

The chain is F-box/LRR-repeat protein At3g59190 from Arabidopsis thaliana (Mouse-ear cress).